Here is a 622-residue protein sequence, read N- to C-terminus: Fanconi anemia group G protein (622 aa).

At Ser-7 the chain carries Phosphoserine. TPR repeat units lie at residues 246 to 279, 344 to 377, 453 to 486, and 514 to 547; these read VQVY…GSAW, SQTK…LLDS, SATH…LFRA, and AAAL…CPGN.

Belongs to the multisubunit FA complex composed of FANCA, FANCB, FANCC, FANCE, FANCF, FANCG, FANCL/PHF9 and FANCM. The complex is not found in FA patients. In complex with FANCF, FANCA and FANCL, but not with FANCC, nor FANCE, interacts with HES1; this interaction may be essential for the stability and nuclear localization of FA core complex proteins. The complex with FANCC and FANCG may also include EIF2AK2 and HSP70. When phosphorylated at Ser-7, forms a complex with BRCA2, FANCD2 and XRCC3. In terms of tissue distribution, highly expressed in testis and thymus. Found in lymphoblasts.

The protein localises to the nucleus. It localises to the cytoplasm. Functionally, DNA repair protein that may operate in a postreplication repair or a cell cycle checkpoint function. May be implicated in interstrand DNA cross-link repair and in the maintenance of normal chromosome stability. Candidate tumor suppressor gene. This is Fanconi anemia group G protein (FANCG) from Homo sapiens (Human).